A 363-amino-acid polypeptide reads, in one-letter code: Pyruvate dehydrogenase E1 component subunit beta-1, mitochondrial (363 aa).

A mitochondrion-targeting transit peptide spans 1–29 (MLGILRQRAIDGASTLRRTRFALVSARSY). Thiamine diphosphate is bound at residue E92. Residues I145, A193, I194, and D196 each contribute to the K(+) site. Residues K247 and K254 each participate in a glycyl lysine isopeptide (Lys-Gly) (interchain with G-Cter in ubiquitin) cross-link.

As to quaternary structure, tetramer of 2 alpha and 2 beta subunits. Requires thiamine diphosphate as cofactor. As to expression, expressed in roots, immature rosettes, and mature rosettes.

The protein localises to the mitochondrion matrix. It catalyses the reaction N(6)-[(R)-lipoyl]-L-lysyl-[protein] + pyruvate + H(+) = N(6)-[(R)-S(8)-acetyldihydrolipoyl]-L-lysyl-[protein] + CO2. Its function is as follows. The pyruvate dehydrogenase complex catalyzes the overall conversion of pyruvate to acetyl-CoA and CO(2). It contains multiple copies of three enzymatic components: pyruvate dehydrogenase (E1), dihydrolipoamide acetyltransferase (E2) and lipoamide dehydrogenase (E3). This is Pyruvate dehydrogenase E1 component subunit beta-1, mitochondrial (PDH2) from Arabidopsis thaliana (Mouse-ear cress).